A 525-amino-acid polypeptide reads, in one-letter code: ATP synthase subunit alpha (525 aa).

169–176 (GDRQTGKT) contributes to the ATP binding site.

This sequence belongs to the ATPase alpha/beta chains family. F-type ATPases have 2 components, CF(1) - the catalytic core - and CF(0) - the membrane proton channel. CF(1) has five subunits: alpha(3), beta(3), gamma(1), delta(1), epsilon(1). CF(0) has three main subunits: a(1), b(2) and c(9-12). The alpha and beta chains form an alternating ring which encloses part of the gamma chain. CF(1) is attached to CF(0) by a central stalk formed by the gamma and epsilon chains, while a peripheral stalk is formed by the delta and b chains.

The protein resides in the cell membrane. It carries out the reaction ATP + H2O + 4 H(+)(in) = ADP + phosphate + 5 H(+)(out). In terms of biological role, produces ATP from ADP in the presence of a proton gradient across the membrane. The alpha chain is a regulatory subunit. This chain is ATP synthase subunit alpha, found in Mesoplasma florum (strain ATCC 33453 / NBRC 100688 / NCTC 11704 / L1) (Acholeplasma florum).